Here is a 500-residue protein sequence, read N- to C-terminus: Lysine--tRNA ligase (500 aa).

Positions 410 and 417 each coordinate Mg(2+).

Belongs to the class-II aminoacyl-tRNA synthetase family. As to quaternary structure, homodimer. The cofactor is Mg(2+).

Its subcellular location is the cytoplasm. It carries out the reaction tRNA(Lys) + L-lysine + ATP = L-lysyl-tRNA(Lys) + AMP + diphosphate. In Shewanella sediminis (strain HAW-EB3), this protein is Lysine--tRNA ligase.